We begin with the raw amino-acid sequence, 1372 residues long: DNA-directed RNA polymerase subunit beta (1372 aa).

The protein belongs to the RNA polymerase beta chain family. As to quaternary structure, the RNAP catalytic core consists of 2 alpha, 1 beta, 1 beta' and 1 omega subunit. When a sigma factor is associated with the core the holoenzyme is formed, which can initiate transcription.

It carries out the reaction RNA(n) + a ribonucleoside 5'-triphosphate = RNA(n+1) + diphosphate. DNA-dependent RNA polymerase catalyzes the transcription of DNA into RNA using the four ribonucleoside triphosphates as substrates. This Bradyrhizobium diazoefficiens (strain JCM 10833 / BCRC 13528 / IAM 13628 / NBRC 14792 / USDA 110) protein is DNA-directed RNA polymerase subunit beta.